Consider the following 152-residue polypeptide: Transcriptional regulator MraZ (152 aa).

SpoVT-AbrB domains follow at residues 5 to 52 (ATLV…PLPE) and 81 to 124 (ASEC…DETT).

It belongs to the MraZ family. Forms oligomers.

It is found in the cytoplasm. It localises to the nucleoid. In terms of biological role, negatively regulates its own expression and that of the subsequent genes in the proximal part of the division and cell wall (dcw) gene cluster. Acts by binding directly to DNA. May also regulate the expression of genes outside the dcw cluster. The sequence is that of Transcriptional regulator MraZ from Shigella dysenteriae serotype 1 (strain Sd197).